Reading from the N-terminus, the 248-residue chain is Phosphoglycerate mutase (248 aa).

Substrate is bound by residues 8–15, 21–22, Arg-60, 87–90, Lys-98, 114–115, and 183–184; these read RHGQSEWN, TG, ERHY, RR, and GN. His-9 acts as the Tele-phosphohistidine intermediate in catalysis. Glu-87 serves as the catalytic Proton donor/acceptor.

The protein belongs to the phosphoglycerate mutase family. BPG-dependent PGAM subfamily.

It localises to the cytoplasm. It carries out the reaction (2R)-2-phosphoglycerate = (2R)-3-phosphoglycerate. The protein operates within carbohydrate degradation; glycolysis; pyruvate from D-glyceraldehyde 3-phosphate: step 3/5. In Candida albicans (strain SC5314 / ATCC MYA-2876) (Yeast), this protein is Phosphoglycerate mutase (GPM1).